Consider the following 507-residue polypeptide: Protein MosB (507 aa).

A DNA-binding region (H-T-H motif) is located at residues 256–275; sequence QAHGALYKGQHVGLLSDIGC. At lysine 282 the chain carries N6-(pyridoxal phosphate)lysine.

This sequence belongs to the DegT/DnrJ/EryC1 family.

Functionally, involved in the biosynthesis of the rhizopine 3-O-methyl-scyllo-inosamine. May have a regulatory role in controlling the housekeeping genes within the nodule which are involved in the biosynthesis of the rhizopine backbone. The polypeptide is Protein MosB (mosB) (Rhizobium meliloti (Ensifer meliloti)).